We begin with the raw amino-acid sequence, 387 residues long: Large ribosomal subunit protein uL3 (387 aa).

Belongs to the universal ribosomal protein uL3 family.

It is found in the cytoplasm. The chain is Large ribosomal subunit protein uL3 (RPL3) from Eremothecium gossypii (strain ATCC 10895 / CBS 109.51 / FGSC 9923 / NRRL Y-1056) (Yeast).